Here is a 412-residue protein sequence, read N- to C-terminus: Poly-beta-1,6-N-acetyl-D-glucosamine synthase (412 aa).

4 helical membrane passes run 7–28 (LLFY…YFFI), 298–320 (IASI…TANI), 332–354 (IFFF…ALFI), and 364–386 (VGLI…VVIM).

The protein belongs to the glycosyltransferase 2 family.

The protein resides in the cell membrane. N-acetylglucosaminyltransferase that catalyzes the polymerization of single monomer units of UDP-N-acetylglucosamine to produce the linear homomer poly-beta-1,6-N-acetyl-D-glucosamine (PNAG, also referred to as PIA), a biofilm adhesin polysaccharide. Requires IcaD for full activity. This chain is Poly-beta-1,6-N-acetyl-D-glucosamine synthase (icaA), found in Staphylococcus epidermidis.